The chain runs to 777 residues: Nuclear autoantigenic sperm protein (777 aa).

Position 2 is an N-acetylalanine (A2). K34 carries the post-translational modification N6-acetyllysine. A TPR 1 repeat occupies 44–77 (AKKLLGLGQKHLVMGDIPAAVNAFQEAASLLGKK). The segment at 117-128 (EEEEGEKTEEES) is histone-binding. The residue at position 124 (T124) is a Phosphothreonine. S128 carries the phosphoserine modification. Basic and acidic residues-rich tracts occupy residues 152-186 (MGEK…REDM), 227-259 (VTSK…EKGG), and 267-276 (IEEKPKEASK). Residues 152-496 (MGEKEAQKTE…ALENKSLQEN (345 aa)) are disordered. The segment at 211-244 (EEGKGAAAPEGLSEAEVTSKKPDQEIPGAEEGKS) is histone-binding. At K243 the chain carries N6-acetyllysine. Residue S244 is modified to Phosphoserine. K285 carries the post-translational modification N6-acetyllysine. A compositionally biased stretch (basic and acidic residues) spans 303 to 319 (DEPKEQVAASESERGKA). Residue S312 is modified to Phosphoserine. The segment covering 342 to 353 (AADASAAEAGSE) has biased composition (low complexity). Residues S399, S411, and S440 each carry the phosphoserine modification. The interval 458 to 501 (EQMKEGEETEGSEEEDKENDKAEETLNDSALENKSLQENEEEEI) is histone-binding. Positions 464–474 (EETEGSEEEDK) are enriched in acidic residues. At T466 the chain carries Phosphothreonine. Residues S469, S486, and S492 each carry the phosphoserine modification. Residues 484 to 493 (NDSALENKSL) show a composition bias toward polar residues. TPR repeat units lie at residues 531–564 (AQAH…QEQY) and 573–606 (AETH…IEKR). Positions 593–648 (VAQFSKSIEVIEKRMAVLNEQMKEAEGSPTEYEKEIEELKELLPEIREKIEDAKES) form a coiled coil. Residue S651 is modified to Phosphoserine. Positions 667–681 (STSGFTPSGGSSSVS) are enriched in low complexity. A disordered region spans residues 667-777 (STSGFTPSGG…AGATVESTAC (111 aa)). The residue at position 672 (T672) is a Phosphothreonine. A phosphoserine mark is found at S694 and S695. A Nuclear localization signal motif is present at residues 705-711 (VRKKRKP). Positions 710-728 (KPEEESPRKDDAKKAKQEP) are enriched in basic and acidic residues. S715 carries the post-translational modification Phosphoserine. Residue K725 forms a Glycyl lysine isopeptide (Lys-Gly) (interchain with G-Cter in SUMO1) linkage. S734 carries the post-translational modification Phosphoserine.

Belongs to the NASP family. As to quaternary structure, binds to linker H1 histones. Interacts with histones H2A, H2B, H3 and H4. Interacts with histone H3.3. Interacts with histones H3 and H4; NASP is a histone chaperone that stabilizes and maintains a soluble pool of histone H3-H4 dimers. Interacts with ASF1A and ASF1B; the interaction is probably indirect and mediated by H3-H4. Also binds to HSP90 in the cytoplasm. This interaction stimulates binding of NASP to H1-6/H1T.

Its subcellular location is the cytoplasm. The protein localises to the nucleus. In terms of biological role, component of the histone chaperone network. Binds and stabilizes histone H3-H4 not bound to chromatin to maintain a soluble reservoir and modulate degradation by chaperone-mediated autophagy. Required for DNA replication, normal cell cycle progression and cell proliferation. Forms a cytoplasmic complex with HSP90 and H1 linker histones and stimulates HSP90 ATPase activity. NASP and H1 histone are subsequently released from the complex and translocate to the nucleus where the histone is released for binding to DNA. In Bos taurus (Bovine), this protein is Nuclear autoantigenic sperm protein.